A 150-amino-acid chain; its full sequence is D-aminoacyl-tRNA deacylase (150 aa).

Residues 138–139 (GP) carry the Gly-cisPro motif, important for rejection of L-amino acids motif.

Belongs to the DTD family. In terms of assembly, homodimer.

Its subcellular location is the cytoplasm. The catalysed reaction is glycyl-tRNA(Ala) + H2O = tRNA(Ala) + glycine + H(+). The enzyme catalyses a D-aminoacyl-tRNA + H2O = a tRNA + a D-alpha-amino acid + H(+). An aminoacyl-tRNA editing enzyme that deacylates mischarged D-aminoacyl-tRNAs. Also deacylates mischarged glycyl-tRNA(Ala), protecting cells against glycine mischarging by AlaRS. Acts via tRNA-based rather than protein-based catalysis; rejects L-amino acids rather than detecting D-amino acids in the active site. By recycling D-aminoacyl-tRNA to D-amino acids and free tRNA molecules, this enzyme counteracts the toxicity associated with the formation of D-aminoacyl-tRNA entities in vivo and helps enforce protein L-homochirality. The sequence is that of D-aminoacyl-tRNA deacylase from Salinibacter ruber (strain DSM 13855 / M31).